The chain runs to 103 residues: MIPGEIHYGRGDIEINTTAQRIEMNVVNTGDRPVQVGSHVHFPQANAALSFDRAAAHGYRLDIPAATAVRFEPGVAHTVSLVPLEGRRAVYGLTLNPPGRLDD.

It belongs to the urease beta subunit family. In terms of assembly, heterotrimer of UreA (gamma), UreB (beta) and UreC (alpha) subunits. Three heterotrimers associate to form the active enzyme.

It localises to the cytoplasm. The catalysed reaction is urea + 2 H2O + H(+) = hydrogencarbonate + 2 NH4(+). It participates in nitrogen metabolism; urea degradation; CO(2) and NH(3) from urea (urease route): step 1/1. In Mycobacterium marinum (strain ATCC BAA-535 / M), this protein is Urease subunit beta.